Consider the following 120-residue polypeptide: Large ribosomal subunit protein uL22 (120 aa).

Belongs to the universal ribosomal protein uL22 family. Part of the 50S ribosomal subunit.

This protein binds specifically to 23S rRNA; its binding is stimulated by other ribosomal proteins, e.g. L4, L17, and L20. It is important during the early stages of 50S assembly. It makes multiple contacts with different domains of the 23S rRNA in the assembled 50S subunit and ribosome. Functionally, the globular domain of the protein is located near the polypeptide exit tunnel on the outside of the subunit, while an extended beta-hairpin is found that lines the wall of the exit tunnel in the center of the 70S ribosome. The protein is Large ribosomal subunit protein uL22 of Crocosphaera subtropica (strain ATCC 51142 / BH68) (Cyanothece sp. (strain ATCC 51142)).